Here is a 441-residue protein sequence, read N- to C-terminus: uncharacterized protein (441 aa).

An ATP-binding site is contributed by 217–224 (GETGTGKT).

It belongs to the GSP E family.

This is an uncharacterized protein from Bacillus anthracis.